We begin with the raw amino-acid sequence, 104 residues long: Nucleoid-associated protein PEPE_1483 (104 aa).

Positions 1–35 (MRGGMGNMQSMMRQMQKMQKKVTEEQEKLNQTEFT) are disordered. Positions 8-17 (MQSMMRQMQK) are enriched in low complexity. Basic and acidic residues predominate over residues 21–30 (KVTEEQEKLN).

Belongs to the YbaB/EbfC family. In terms of assembly, homodimer.

The protein resides in the cytoplasm. The protein localises to the nucleoid. Binds to DNA and alters its conformation. May be involved in regulation of gene expression, nucleoid organization and DNA protection. In Pediococcus pentosaceus (strain ATCC 25745 / CCUG 21536 / LMG 10740 / 183-1w), this protein is Nucleoid-associated protein PEPE_1483.